The chain runs to 386 residues: 1-deoxy-D-xylulose 5-phosphate reductoisomerase (386 aa).

Positions 10, 11, 12, 13, 36, 38, and 122 each coordinate NADPH. Lysine 123 is a binding site for 1-deoxy-D-xylulose 5-phosphate. Glutamate 124 is a binding site for NADPH. Mn(2+) is bound at residue aspartate 148. 1-deoxy-D-xylulose 5-phosphate contacts are provided by serine 149, glutamate 150, serine 174, and histidine 197. Glutamate 150 serves as a coordination point for Mn(2+). Glycine 203 contacts NADPH. 1-deoxy-D-xylulose 5-phosphate-binding residues include serine 210, asparagine 215, lysine 216, and glutamate 219. Position 219 (glutamate 219) interacts with Mn(2+).

This sequence belongs to the DXR family. The cofactor is Mg(2+). It depends on Mn(2+) as a cofactor.

It carries out the reaction 2-C-methyl-D-erythritol 4-phosphate + NADP(+) = 1-deoxy-D-xylulose 5-phosphate + NADPH + H(+). Its pathway is isoprenoid biosynthesis; isopentenyl diphosphate biosynthesis via DXP pathway; isopentenyl diphosphate from 1-deoxy-D-xylulose 5-phosphate: step 1/6. Functionally, catalyzes the NADPH-dependent rearrangement and reduction of 1-deoxy-D-xylulose-5-phosphate (DXP) to 2-C-methyl-D-erythritol 4-phosphate (MEP). This is 1-deoxy-D-xylulose 5-phosphate reductoisomerase from Geotalea uraniireducens (strain Rf4) (Geobacter uraniireducens).